The following is a 388-amino-acid chain: Chorismate synthase (388 aa).

Residues Arg-39 and Arg-45 each coordinate NADP(+). FMN-binding positions include 132–134 (RSS), 251–252 (NA), Gly-296, 311–315 (KPIPT), and Arg-337.

This sequence belongs to the chorismate synthase family. In terms of assembly, homotetramer. The cofactor is FMNH2.

It carries out the reaction 5-O-(1-carboxyvinyl)-3-phosphoshikimate = chorismate + phosphate. Its pathway is metabolic intermediate biosynthesis; chorismate biosynthesis; chorismate from D-erythrose 4-phosphate and phosphoenolpyruvate: step 7/7. Functionally, catalyzes the anti-1,4-elimination of the C-3 phosphate and the C-6 proR hydrogen from 5-enolpyruvylshikimate-3-phosphate (EPSP) to yield chorismate, which is the branch point compound that serves as the starting substrate for the three terminal pathways of aromatic amino acid biosynthesis. This reaction introduces a second double bond into the aromatic ring system. This is Chorismate synthase from Staphylococcus aureus (strain Mu50 / ATCC 700699).